Here is a 240-residue protein sequence, read N- to C-terminus: Seed lectin (240 aa).

Asn111 is a glycosylation site (N-linked (GlcNAc...) asparagine). Residues Glu123 and Asp125 each contribute to the Mn(2+) site. The Ca(2+) site is built by Asp125, Asn129, and Asp132. Positions 132 and 137 each coordinate Mn(2+). Residue Asn183 is glycosylated (N-linked (GlcNAc...) asparagine).

The protein belongs to the leguminous lectin family. As to quaternary structure, homotetramer. Post-translationally, partially N-glycosylated at Asn-111 and Asn-183 with the heptasaccharide [(beta-xylosyl-1,2)(alpha-mannosyl-1,6)(alpha-mannosyl-1,3)]beta-manosyl-1,4-GlcNAC-beta-1,4-GlcNAc-beta-1,4 [alpha-fucosyl-1,3]GlcNAc. A small proportion of alpha chains are proteolytically cleaved at 114-115 into gamma and beta chains. This is probably dependent on the deglycosylation of Asn-111. Seed.

In terms of biological role, lectin that binds galactose. The sequence is that of Seed lectin from Vatairea macrocarpa.